Reading from the N-terminus, the 39-residue chain is Photosystem I reaction center subunit IX (39 aa).

The chain crosses the membrane as a helical span at residues Phe-4–Ile-24.

Belongs to the PsaJ family.

The protein localises to the cellular thylakoid membrane. Its function is as follows. May help in the organization of the PsaE and PsaF subunits. The chain is Photosystem I reaction center subunit IX from Synechococcus sp. (strain CC9311).